Here is a 542-residue protein sequence, read N- to C-terminus: Chaperonin GroEL (542 aa).

ATP contacts are provided by residues 29–32 (TLGP), 86–90 (DGTTT), Gly413, 477–479 (NAA), and Asp493.

This sequence belongs to the chaperonin (HSP60) family. Forms a cylinder of 14 subunits composed of two heptameric rings stacked back-to-back. Interacts with the co-chaperonin GroES.

It is found in the cytoplasm. It carries out the reaction ATP + H2O + a folded polypeptide = ADP + phosphate + an unfolded polypeptide.. Its function is as follows. Together with its co-chaperonin GroES, plays an essential role in assisting protein folding. The GroEL-GroES system forms a nano-cage that allows encapsulation of the non-native substrate proteins and provides a physical environment optimized to promote and accelerate protein folding. This Heliobacterium modesticaldum (strain ATCC 51547 / Ice1) protein is Chaperonin GroEL.